The chain runs to 603 residues: Prosaposin receptor GPR37 (603 aa).

Residues 1-26 (MPAPGAPLSRTSRLLLLLLFKVSVSA) form the signal peptide. At 27-255 (ALSFVPEPRN…QESYGAYAVM (229 aa)) the chain is on the extracellular side. Residue Asn-36 is glycosylated (N-linked (GlcNAc...) asparagine). Residues 39–232 (CLGESCSPLI…GGPRRGNSTN (194 aa)) are disordered. Composition is skewed to basic and acidic residues over residues 51–79 (RSRD…EAEV), 145–158 (TSER…RDEI), and 165–175 (HSVKTEPEPRD). N-linked (GlcNAc...) asparagine glycans are attached at residues Asn-212 and Asn-229. Residues 256-276 (CLSVVIFGTGIIGNLAVMCIV) form a helical membrane-spanning segment. Over 277–289 (CHNYYMRSISNSL) the chain is Cytoplasmic. Residues 290 to 310 (LANLAFWDFLIIFFCLPLVIF) traverse the membrane as a helical segment. The Extracellular segment spans residues 311–325 (HELTKKWLLEDFSCK). The cysteines at positions 324 and 409 are disulfide-linked. A helical membrane pass occupies residues 326 to 346 (IVPYIEVASLGVTTFTLCALC). Topologically, residues 347–369 (IDRFRAATNVQMYYEMIENCSST) are cytoplasmic. A helical membrane pass occupies residues 370 to 390 (TAKLAVIWVGALLLALPEVVL). Topologically, residues 391 to 433 (RQLSKEDLGFSGQAPAERCVIKISPDLPDTIYVLALTYDGARL) are extracellular. The chain crosses the membrane as a helical span at residues 434–454 (WWYFGCYFCLPTLFTITCSLV). The Cytoplasmic segment spans residues 455–483 (TARKIRKAEKASTRGNKRQIHLESQMNCT). A helical membrane pass occupies residues 484–504 (VVALTILYGFCIIPENICNIV). Over 505–521 (TAYMATGVSQQTMDLLN) the chain is Extracellular. Residues 522-542 (IISQFLLFFKSCVTPVLLFCL) traverse the membrane as a helical segment. The Cytoplasmic portion of the chain corresponds to 543–603 (CRPFSRAFME…STFASVGTHC (61 aa)).

This sequence belongs to the G-protein coupled receptor 1 family. As to quaternary structure, forms a complex with PRKN, STUB1 and HSP70. The amount of STUB1 in the complex increases during ER stress. STUB1 promotes the dissociation of HSP70 from PRKN, thus facilitating PRKN-mediated GPR37 ubiquitination. Interacts with PACRG. Post-translationally, the N-terminus is cleaved by ADAM10 metalloproteinase; mediating limited proteolysis leading to the release of receptor ectodomain by shedding. In addition, cleaved by FURIN between Arg-53 and Asp-54. Ubiquitinated by PRKN in the presence of UBE2E1 and UBE2L3 in the endoplasmic reticulum. The unfolded form is specifically ubiquitinated by SYVN1, which promotes its proteasomal degradation and prevents neuronal cell death. In terms of tissue distribution, highly expressed in the brain. High levels of expression were seen in fiber tracts such as the corpus callosum, anterior commissure, fornix, internal capsule, cerebral peduncles, and stria terminalis. Additionally, moderate levels of expression were seen in the pyramidal tracts and cerebellar peduncles, as well as in the spinal tract of the trigeminal nerve and the spinal fasciculi.

Its subcellular location is the cell projection. It localises to the dendrite. The protein localises to the synapse. The protein resides in the cell membrane. It is found in the endoplasmic reticulum membrane. In terms of biological role, G-protein-coupled receptor that plays a role in several physiological pathways such as resolution of inflammatory pain and oligodendrocyte differentiation. Acts as a receptor for several ligands including prosaposin, osteocalcin or neuroprotectin D1. Ligand binding induces endocytosis, followed by an ERK phosphorylation cascade. Acts as a receptor for osteocalcin (OCN) to regulate oligodendrocyte differentiation and central nervous system myelination. Mechanistically, plays a negative role in oligodendrocyte differentiation and myelination during development via activation of the ERK1/2 signaling pathway. Therefore, regulates the stability of myelin or resistance of myelin itself to demyelination. Upon activation by neuroprotectin D1 (NPD1), promotes the activation of phagocytosis in macrophages as well as the shift in cytokine release toward an anti-inflammatory profile, and thus helps to reverse inflammatory pain. In addition, the increased macrophage phagocytosis mediates protection against sepsis upon pathogen infection. Additionally, extracellular vesicles derived from efferocyte express prosaposin, which binds to macrophage GPR37 to increase expression of the efferocytosis receptor TIM4 via an ERK-AP1-dependent signaling axis, leading to increased macrophage efferocytosis efficiency and accelerated resolution of inflammation. May also act as a maturation factor of LRP6, protecting LRP6 from the endoplasmic reticulum (ER)-associated protein degradation (ERAD) and thereby promoting the Wnt/beta-catenin signaling pathway. In Rattus norvegicus (Rat), this protein is Prosaposin receptor GPR37 (Gpr37).